The primary structure comprises 499 residues: Aspartyl/glutamyl-tRNA(Asn/Gln) amidotransferase subunit B (499 aa).

This sequence belongs to the GatB/GatE family. GatB subfamily. As to quaternary structure, heterotrimer of A, B and C subunits.

The enzyme catalyses L-glutamyl-tRNA(Gln) + L-glutamine + ATP + H2O = L-glutaminyl-tRNA(Gln) + L-glutamate + ADP + phosphate + H(+). The catalysed reaction is L-aspartyl-tRNA(Asn) + L-glutamine + ATP + H2O = L-asparaginyl-tRNA(Asn) + L-glutamate + ADP + phosphate + 2 H(+). Its function is as follows. Allows the formation of correctly charged Asn-tRNA(Asn) or Gln-tRNA(Gln) through the transamidation of misacylated Asp-tRNA(Asn) or Glu-tRNA(Gln) in organisms which lack either or both of asparaginyl-tRNA or glutaminyl-tRNA synthetases. The reaction takes place in the presence of glutamine and ATP through an activated phospho-Asp-tRNA(Asn) or phospho-Glu-tRNA(Gln). This chain is Aspartyl/glutamyl-tRNA(Asn/Gln) amidotransferase subunit B, found in Salinispora arenicola (strain CNS-205).